The primary structure comprises 313 residues: MKKKLLAGAITLLSVATLAACSKGSEGADLISMKGDVITEHQFYEQVKSNPSAQQVLLNMTIQKVFEKQYGSELDDKEVDDTIAEEKKQYGENYQRVLSQAGMTLETRKAQIRTSKLVELAVKKVAEAELTDEAYKKAFDEYTPDVTAQIIRLNNEDKAKEVLEKAKAEGADFAQLAKDNSTDEKTKENGGEITFDSASTEVPEQVKKAAFALDVDGVSDVITATGTQAYSSQYYIVKLTKKTEKSSNIDDYKEKLKTVILTQKQNDSTFVQSIIGKELQAANIKVKDQAFQNIFTQYIGGGDSSSSSSTSNE.

The first 20 residues, 1 to 20 (MKKKLLAGAITLLSVATLAA), serve as a signal peptide directing secretion. A lipid anchor (N-palmitoyl cysteine) is attached at Cys-21. The S-diacylglycerol cysteine moiety is linked to residue Cys-21. Residues 143–241 (TPDVTAQIIR…SQYYIVKLTK (99 aa)) form the PpiC domain.

It belongs to the PrsA family.

The protein localises to the cell membrane. It carries out the reaction [protein]-peptidylproline (omega=180) = [protein]-peptidylproline (omega=0). Plays a major role in protein secretion by helping the post-translocational extracellular folding of several secreted proteins. The chain is Foldase protein PrsA from Streptococcus pneumoniae serotype 4 (strain ATCC BAA-334 / TIGR4).